A 212-amino-acid polypeptide reads, in one-letter code: Protein-L-isoaspartate O-methyltransferase (212 aa).

Residue Ser-60 is part of the active site.

The protein belongs to the methyltransferase superfamily. L-isoaspartyl/D-aspartyl protein methyltransferase family.

Its subcellular location is the cytoplasm. The enzyme catalyses [protein]-L-isoaspartate + S-adenosyl-L-methionine = [protein]-L-isoaspartate alpha-methyl ester + S-adenosyl-L-homocysteine. In terms of biological role, catalyzes the methyl esterification of L-isoaspartyl residues in peptides and proteins that result from spontaneous decomposition of normal L-aspartyl and L-asparaginyl residues. It plays a role in the repair and/or degradation of damaged proteins. This chain is Protein-L-isoaspartate O-methyltransferase, found in Methanococcus maripaludis (strain C7 / ATCC BAA-1331).